The chain runs to 181 residues: MFGLKQFYQNEVRTKLAQELDIKNPMLLPKLEKIVISVGAGAYAKDMKIMQNIAQTISLIAGQKAVITKAKKSVAGFKIREGMAVGAKVTLRNKRMYNFLEKLIVISLPRVKDFRGISRNGFDGHGNYTFGINEQLIFPEVVYDDIMVSHGMNITMVTSTDNDKEAFKLLELLGLPFAKVR.

This sequence belongs to the universal ribosomal protein uL5 family. In terms of assembly, part of the 50S ribosomal subunit; part of the 5S rRNA/L5/L18/L25 subcomplex. Contacts the 5S rRNA and the P site tRNA. Forms a bridge to the 30S subunit in the 70S ribosome.

This is one of the proteins that bind and probably mediate the attachment of the 5S RNA into the large ribosomal subunit, where it forms part of the central protuberance. In the 70S ribosome it contacts protein S13 of the 30S subunit (bridge B1b), connecting the 2 subunits; this bridge is implicated in subunit movement. Contacts the P site tRNA; the 5S rRNA and some of its associated proteins might help stabilize positioning of ribosome-bound tRNAs. The chain is Large ribosomal subunit protein uL5 from Helicobacter pylori (strain P12).